Here is a 95-residue protein sequence, read N- to C-terminus: Aspartyl/glutamyl-tRNA(Asn/Gln) amidotransferase subunit C (95 aa).

Belongs to the GatC family. As to quaternary structure, heterotrimer of A, B and C subunits.

It carries out the reaction L-glutamyl-tRNA(Gln) + L-glutamine + ATP + H2O = L-glutaminyl-tRNA(Gln) + L-glutamate + ADP + phosphate + H(+). The enzyme catalyses L-aspartyl-tRNA(Asn) + L-glutamine + ATP + H2O = L-asparaginyl-tRNA(Asn) + L-glutamate + ADP + phosphate + 2 H(+). Its function is as follows. Allows the formation of correctly charged Asn-tRNA(Asn) or Gln-tRNA(Gln) through the transamidation of misacylated Asp-tRNA(Asn) or Glu-tRNA(Gln) in organisms which lack either or both of asparaginyl-tRNA or glutaminyl-tRNA synthetases. The reaction takes place in the presence of glutamine and ATP through an activated phospho-Asp-tRNA(Asn) or phospho-Glu-tRNA(Gln). In Rhizobium etli (strain ATCC 51251 / DSM 11541 / JCM 21823 / NBRC 15573 / CFN 42), this protein is Aspartyl/glutamyl-tRNA(Asn/Gln) amidotransferase subunit C.